A 238-amino-acid chain; its full sequence is Ribonuclease PH (238 aa).

Residues Arg-86 and 124–126 (GTR) contribute to the phosphate site.

Belongs to the RNase PH family. As to quaternary structure, homohexameric ring arranged as a trimer of dimers.

The catalysed reaction is tRNA(n+1) + phosphate = tRNA(n) + a ribonucleoside 5'-diphosphate. Phosphorolytic 3'-5' exoribonuclease that plays an important role in tRNA 3'-end maturation. Removes nucleotide residues following the 3'-CCA terminus of tRNAs; can also add nucleotides to the ends of RNA molecules by using nucleoside diphosphates as substrates, but this may not be physiologically important. Probably plays a role in initiation of 16S rRNA degradation (leading to ribosome degradation) during starvation. The sequence is that of Ribonuclease PH from Rhizobium rhizogenes (strain K84 / ATCC BAA-868) (Agrobacterium radiobacter).